The primary structure comprises 398 residues: Putative F-box protein At3g17620 (398 aa).

Residues 1 to 45 (MMSDLPRDLLEERLSRVPVKSLREARFTCKNWKTLSKKRSFTKKH) enclose the F-box domain.

This Arabidopsis thaliana (Mouse-ear cress) protein is Putative F-box protein At3g17620.